The primary structure comprises 347 residues: Phenylalanine--tRNA ligase alpha subunit (347 aa).

Glu-268 is a Mg(2+) binding site.

Belongs to the class-II aminoacyl-tRNA synthetase family. Phe-tRNA synthetase alpha subunit type 1 subfamily. As to quaternary structure, tetramer of two alpha and two beta subunits. Requires Mg(2+) as cofactor.

The protein resides in the cytoplasm. It catalyses the reaction tRNA(Phe) + L-phenylalanine + ATP = L-phenylalanyl-tRNA(Phe) + AMP + diphosphate + H(+). The polypeptide is Phenylalanine--tRNA ligase alpha subunit (Leptothrix cholodnii (strain ATCC 51168 / LMG 8142 / SP-6) (Leptothrix discophora (strain SP-6))).